The sequence spans 484 residues: Proline--tRNA ligase (484 aa).

This sequence belongs to the class-II aminoacyl-tRNA synthetase family. ProS type 3 subfamily. As to quaternary structure, homodimer.

The protein resides in the cytoplasm. The catalysed reaction is tRNA(Pro) + L-proline + ATP = L-prolyl-tRNA(Pro) + AMP + diphosphate. Its function is as follows. Catalyzes the attachment of proline to tRNA(Pro) in a two-step reaction: proline is first activated by ATP to form Pro-AMP and then transferred to the acceptor end of tRNA(Pro). In Haloarcula marismortui (strain ATCC 43049 / DSM 3752 / JCM 8966 / VKM B-1809) (Halobacterium marismortui), this protein is Proline--tRNA ligase.